The sequence spans 480 residues: Glycogen synthase (480 aa).

Residue lysine 15 coordinates ADP-alpha-D-glucose.

It belongs to the glycosyltransferase 1 family. Bacterial/plant glycogen synthase subfamily.

It catalyses the reaction [(1-&gt;4)-alpha-D-glucosyl](n) + ADP-alpha-D-glucose = [(1-&gt;4)-alpha-D-glucosyl](n+1) + ADP + H(+). It functions in the pathway glycan biosynthesis; glycogen biosynthesis. In terms of biological role, synthesizes alpha-1,4-glucan chains using ADP-glucose. The sequence is that of Glycogen synthase from Desulforamulus reducens (strain ATCC BAA-1160 / DSM 100696 / MI-1) (Desulfotomaculum reducens).